Here is a 110-residue protein sequence, read N- to C-terminus: UPF0060 membrane protein Pmen_1247 (110 aa).

4 consecutive transmembrane segments (helical) span residues 5-25, 31-51, 59-79, and 84-104; these read LWFL…WMWL, AWWI…LTRV, AYAA…ALIE, and MLSD…ILFA.

It belongs to the UPF0060 family.

The protein resides in the cell inner membrane. The polypeptide is UPF0060 membrane protein Pmen_1247 (Ectopseudomonas mendocina (strain ymp) (Pseudomonas mendocina)).